The primary structure comprises 343 residues: NADH dehydrogenase [ubiquinone] 1 alpha subcomplex subunit 10, mitochondrial (343 aa).

A mitochondrion-targeting transit peptide spans 1-23 (MALRLLRLVPPRVGGIHTSVQFK). An N6-acetyllysine; alternate modification is found at K110. N6-succinyllysine; alternate is present on K110. S238 carries the phosphoserine; by PINK1 modification.

This sequence belongs to the complex I NDUFA10 subunit family. In terms of assembly, complex I is composed of 45 different subunits. This a component of the hydrophobic protein fraction. FAD serves as cofactor. Phosphorylation at Ser-238 by PINK1 is required for the binding and/or reduction of the complex I substrate ubiquinone.

It localises to the mitochondrion matrix. Functionally, accessory subunit of the mitochondrial membrane respiratory chain NADH dehydrogenase (Complex I), that is believed not to be involved in catalysis. Complex I functions in the transfer of electrons from NADH to the respiratory chain. The immediate electron acceptor for the enzyme is believed to be ubiquinone. The chain is NADH dehydrogenase [ubiquinone] 1 alpha subcomplex subunit 10, mitochondrial (NDUFA10) from Bos taurus (Bovine).